Consider the following 182-residue polypeptide: Plasmolipin (182 aa).

Residues 1-35 (MAEFPSKVSTRTSSPAQGVGASVSALRPDLGFVRS) are Cytoplasmic-facing. Serine 9 bears the Phosphoserine mark. The MARVEL domain occupies 32–166 (FVRSALGVLA…SAFFSFQAWR (135 aa)). The helical transmembrane segment at 36-56 (ALGVLALLQLALGLLVWALIA) threads the bilayer. The Extracellular segment spans residues 57–68 (DTPYHLYPAYGW). Residues 69–89 (VMFVAVFLWLVTIVFFIIYLF) traverse the membrane as a helical segment. Topologically, residues 90–99 (QLHMKLYMVP) are cytoplasmic. The chain crosses the membrane as a helical span at residues 100-120 (WPLVLLIFFVAATVLYITAFI). Topologically, residues 121–141 (ACAAAVDLTSLRGSRPYNQRS) are extracellular. The chain crosses the membrane as a helical span at residues 142-162 (AASFFACLVMIAYGVSAFFSF). Residues 163–182 (QAWRGVGSNAATSQMAGGYS) lie on the Cytoplasmic side of the membrane.

Belongs to the MAL family. As to quaternary structure, forms oligomers. Phosphorylated.

It localises to the membrane. It is found in the cell membrane. The protein localises to the myelin membrane. The protein resides in the apical cell membrane. Functionally, main component of the myelin sheath that plays an important role in myelin membrane biogenesis and myelination. Plays an essential function in apical endocytosis. Regulates epithelial development through the regulation of apical endocytosis. Part of the intracellular machinery that mediates basolateral-to-apical transport of ICAM-1, an essential adhesion receptor in epithelial cells, from the subapical compartment in hepatic epithelial cells. The sequence is that of Plasmolipin (Pllp) from Mus musculus (Mouse).